Reading from the N-terminus, the 202-residue chain is D-alanyl-D-alanine dipeptidase (202 aa).

Zn(2+) contacts are provided by H116 and D123. The Proton donor/acceptor role is filled by E181. H184 serves as a coordination point for Zn(2+).

It belongs to the peptidase M15D family. It depends on Zn(2+) as a cofactor.

It carries out the reaction D-alanyl-D-alanine + H2O = 2 D-alanine. Functionally, catalyzes hydrolysis of the D-alanyl-D-alanine dipeptide. This chain is D-alanyl-D-alanine dipeptidase (vanXB), found in Enterococcus faecalis (strain ATCC 700802 / V583).